Consider the following 318-residue polypeptide: Methionyl-tRNA formyltransferase (318 aa).

Residue 112 to 115 (SILP) coordinates (6S)-5,6,7,8-tetrahydrofolate.

This sequence belongs to the Fmt family.

It catalyses the reaction L-methionyl-tRNA(fMet) + (6R)-10-formyltetrahydrofolate = N-formyl-L-methionyl-tRNA(fMet) + (6S)-5,6,7,8-tetrahydrofolate + H(+). Functionally, attaches a formyl group to the free amino group of methionyl-tRNA(fMet). The formyl group appears to play a dual role in the initiator identity of N-formylmethionyl-tRNA by promoting its recognition by IF2 and preventing the misappropriation of this tRNA by the elongation apparatus. The chain is Methionyl-tRNA formyltransferase from Shewanella sp. (strain MR-7).